A 342-amino-acid polypeptide reads, in one-letter code: Nucleoid-associated protein Shewmr4_2217 (342 aa).

This sequence belongs to the YejK family.

Its subcellular location is the cytoplasm. It is found in the nucleoid. This Shewanella sp. (strain MR-4) protein is Nucleoid-associated protein Shewmr4_2217.